The sequence spans 100 residues: Urease subunit gamma (100 aa).

The protein belongs to the urease gamma subunit family. In terms of assembly, heterotrimer of UreA (gamma), UreB (beta) and UreC (alpha) subunits. Three heterotrimers associate to form the active enzyme.

It is found in the cytoplasm. The catalysed reaction is urea + 2 H2O + H(+) = hydrogencarbonate + 2 NH4(+). Its pathway is nitrogen metabolism; urea degradation; CO(2) and NH(3) from urea (urease route): step 1/1. The polypeptide is Urease subunit gamma (Bacillus cereus (strain ATCC 10987 / NRS 248)).